Reading from the N-terminus, the 286-residue chain is Probable ketoamine kinase YniA (286 aa).

91–93 contributes to the ATP binding site; sequence DYL. D193 serves as the catalytic Proton acceptor.

This sequence belongs to the fructosamine kinase family.

Functionally, ketoamine kinase that phosphorylates ketoamines on the third carbon of the sugar moiety to generate ketoamine 3-phosphate. This is Probable ketoamine kinase YniA (yniA) from Escherichia coli O157:H7.